The chain runs to 387 residues: Phosphoglycerate kinase (387 aa).

Substrate is bound by residues 21–23 (DLN), Arg-36, 59–62 (HLGR), Arg-113, and Arg-146. Residues Lys-197, Glu-314, and 340–343 (GGDT) each bind ATP.

The protein belongs to the phosphoglycerate kinase family. In terms of assembly, monomer.

The protein localises to the cytoplasm. It carries out the reaction (2R)-3-phosphoglycerate + ATP = (2R)-3-phospho-glyceroyl phosphate + ADP. The protein operates within carbohydrate degradation; glycolysis; pyruvate from D-glyceraldehyde 3-phosphate: step 2/5. This is Phosphoglycerate kinase from Pseudomonas putida (strain W619).